The following is a 514-amino-acid chain: Peptide chain release factor 3 (514 aa).

One can recognise a tr-type G domain in the interval 8 to 268 (KKRRTFAIIS…TFLKFAPEPH (261 aa)). Residues 17–24 (SHPDAGKT), 85–89 (DTPGH), and 139–142 (NKLD) contribute to the GTP site.

This sequence belongs to the TRAFAC class translation factor GTPase superfamily. Classic translation factor GTPase family. PrfC subfamily.

It is found in the cytoplasm. Increases the formation of ribosomal termination complexes and stimulates activities of RF-1 and RF-2. It binds guanine nucleotides and has strong preference for UGA stop codons. It may interact directly with the ribosome. The stimulation of RF-1 and RF-2 is significantly reduced by GTP and GDP, but not by GMP. The sequence is that of Peptide chain release factor 3 from Streptococcus sanguinis (strain SK36).